The primary structure comprises 320 residues: Mitochondrial thiamine pyrophosphate carrier (320 aa).

Solcar repeat units lie at residues 13–106, 116–202, and 214–309; these read NTKF…LTEL, REFS…LKHL, and NENL…FCNV. The chain crosses the membrane as a helical span at residues 19–39; sequence AVAGSVSGLVTRALISPFDVI. Ser51 is subject to Phosphoserine. 4 helical membrane-spanning segments follow: residues 87–107, 122–142, 173–193, and 220–240; these read ILSI…TELV, FVCG…VDVL, VFYK…GLQF, and LLCG…LDLF. Positions 241–246 match the Substrate recognition motif; that stretch reads KKRLQV. Residues 293 to 313 traverse the membrane as a helical segment; it reads ALSTGFMFFSYEFFCNVFHCM.

Belongs to the mitochondrial carrier (TC 2.A.29) family. In terms of tissue distribution, expressed in all tissues examined except for placenta. Highest levels in colon, kidney, lung, testis, spleen, and brain.

It is found in the mitochondrion membrane. It carries out the reaction thiamine phosphate(out) + thiamine diphosphate(in) = thiamine phosphate(in) + thiamine diphosphate(out). In terms of biological role, mitochondrial transporter mediating uptake of thiamine diphosphate into mitochondria. It is not clear if the antiporter activity is affected by the membrane potential or by the proton electrochemical gradient. In Homo sapiens (Human), this protein is Mitochondrial thiamine pyrophosphate carrier.